A 161-amino-acid polypeptide reads, in one-letter code: Cytochrome b6-f complex subunit 4 (161 aa).

Helical transmembrane passes span 37 to 57 (LLYIFPVVIMGTISLVIGLAV), 96 to 116 (LLGVLIQTTIPLGLMLIPFIE), and 132 to 152 (SVFLFSVVFTLWLGIGATLPI).

The protein belongs to the cytochrome b family. PetD subfamily. In terms of assembly, the 4 large subunits of the cytochrome b6-f complex are cytochrome b6, subunit IV (17 kDa polypeptide, PetD), cytochrome f and the Rieske protein, while the 4 small subunits are PetG, PetL, PetM and PetN. The complex functions as a dimer.

The protein localises to the cellular thylakoid membrane. Component of the cytochrome b6-f complex, which mediates electron transfer between photosystem II (PSII) and photosystem I (PSI), cyclic electron flow around PSI, and state transitions. This Acaryochloris marina (strain MBIC 11017) protein is Cytochrome b6-f complex subunit 4.